Consider the following 498-residue polypeptide: Glutamate--tRNA ligase (498 aa).

The short motif at 11 to 21 (PSPTGHLHIGN) is the 'HIGH' region element. A 'KMSKS' region motif is present at residues 260 to 264 (KLSKR). Residue K263 coordinates ATP.

This sequence belongs to the class-I aminoacyl-tRNA synthetase family. Glutamate--tRNA ligase type 1 subfamily. As to quaternary structure, monomer.

It localises to the cytoplasm. It carries out the reaction tRNA(Glu) + L-glutamate + ATP = L-glutamyl-tRNA(Glu) + AMP + diphosphate. Its function is as follows. Catalyzes the attachment of glutamate to tRNA(Glu) in a two-step reaction: glutamate is first activated by ATP to form Glu-AMP and then transferred to the acceptor end of tRNA(Glu). In Leuconostoc mesenteroides subsp. mesenteroides (strain ATCC 8293 / DSM 20343 / BCRC 11652 / CCM 1803 / JCM 6124 / NCDO 523 / NBRC 100496 / NCIMB 8023 / NCTC 12954 / NRRL B-1118 / 37Y), this protein is Glutamate--tRNA ligase.